An 872-amino-acid chain; its full sequence is Trichohyalin-like protein 1 (872 aa).

In terms of domain architecture, EF-hand spans Cys-46–Val-81. The span at Gln-117–Asp-127 shows a compositional bias: polar residues. 3 disordered regions span residues Gln-117–Ala-759, Leu-774–Asp-813, and Glu-830–Gln-872. Composition is skewed to basic and acidic residues over residues Ser-142–Pro-155, Leu-164–Gln-190, Thr-218–Ala-235, Gly-296–Leu-307, Ala-324–Asp-348, Arg-365–Glu-375, Glu-399–Glu-435, and Ser-486–Asp-505. The span at Asn-538–Glu-570 shows a compositional bias: polar residues. 3 stretches are compositionally biased toward basic and acidic residues: residues Thr-571–Gln-584, Arg-592–Gly-608, and Thr-664–Asp-684. 2 stretches are compositionally biased toward polar residues: residues Glu-699–Cys-708 and Ser-718–Ser-729. Over residues Thr-730–Glu-751 the composition is skewed to basic and acidic residues. 2 stretches are compositionally biased toward polar residues: residues Leu-774–Val-793 and Asn-801–Ser-812. Residues Leu-849–Lys-865 are compositionally biased toward basic and acidic residues.

This sequence belongs to the S-100 family.

In Bos taurus (Bovine), this protein is Trichohyalin-like protein 1 (TCHHL1).